The following is a 101-amino-acid chain: DNA-binding protein HU (101 aa).

Belongs to the bacterial histone-like protein family. As to quaternary structure, homodimer.

In terms of biological role, histone-like DNA-binding protein which is capable of wrapping DNA to stabilize it, and thus to prevent its denaturation under extreme environmental conditions. In Rickettsia bellii (strain RML369-C), this protein is DNA-binding protein HU (hup).